The following is a 335-amino-acid chain: Biotin synthase (335 aa).

The Radical SAM core domain occupies 43-269 (YFGKKVKLNM…INPTKEIRIA (227 aa)). 3 residues coordinate [4Fe-4S] cluster: C61, C65, and C68. Residues C104, C137, C197, and R267 each coordinate [2Fe-2S] cluster.

Belongs to the radical SAM superfamily. Biotin synthase family. In terms of assembly, homodimer. The cofactor is [4Fe-4S] cluster. It depends on [2Fe-2S] cluster as a cofactor.

It catalyses the reaction (4R,5S)-dethiobiotin + (sulfur carrier)-SH + 2 reduced [2Fe-2S]-[ferredoxin] + 2 S-adenosyl-L-methionine = (sulfur carrier)-H + biotin + 2 5'-deoxyadenosine + 2 L-methionine + 2 oxidized [2Fe-2S]-[ferredoxin]. It functions in the pathway cofactor biosynthesis; biotin biosynthesis; biotin from 7,8-diaminononanoate: step 2/2. In terms of biological role, catalyzes the conversion of dethiobiotin (DTB) to biotin by the insertion of a sulfur atom into dethiobiotin via a radical-based mechanism. In Staphylococcus aureus (strain MSSA476), this protein is Biotin synthase.